Here is a 405-residue protein sequence, read N- to C-terminus: Acetate kinase (405 aa).

Residue N7 coordinates Mg(2+). K14 provides a ligand contact to ATP. R91 contributes to the substrate binding site. The active-site Proton donor/acceptor is the D148. Residues 208 to 212 (HLGNG) and 283 to 285 (DFR) contribute to the ATP site. E384 contacts Mg(2+).

This sequence belongs to the acetokinase family. Homodimer. Mg(2+) is required as a cofactor. Requires Mn(2+) as cofactor.

It localises to the cytoplasm. The catalysed reaction is acetate + ATP = acetyl phosphate + ADP. It functions in the pathway metabolic intermediate biosynthesis; acetyl-CoA biosynthesis; acetyl-CoA from acetate: step 1/2. Catalyzes the formation of acetyl phosphate from acetate and ATP. Can also catalyze the reverse reaction. This chain is Acetate kinase, found in Dictyoglomus turgidum (strain DSM 6724 / Z-1310).